A 139-amino-acid chain; its full sequence is Large ribosomal subunit protein uL16 (139 aa).

This sequence belongs to the universal ribosomal protein uL16 family. Part of the 50S ribosomal subunit.

Binds 23S rRNA and is also seen to make contacts with the A and possibly P site tRNAs. This is Large ribosomal subunit protein uL16 from Treponema denticola (strain ATCC 35405 / DSM 14222 / CIP 103919 / JCM 8153 / KCTC 15104).